Consider the following 379-residue polypeptide: Chaperone protein DnaJ (379 aa).

Positions 5–70 (DYYELLEVSR…QKRAAYDQFG (66 aa)) constitute a J domain. A CR-type zinc finger spans residues 135-213 (GKEVEITVPR…CHGQGRVRES (79 aa)). Residues Cys148, Cys151, Cys165, Cys168, Cys187, Cys190, Cys201, and Cys204 each contribute to the Zn(2+) site. CXXCXGXG motif repeat units lie at residues 148–155 (CTVCEGSG), 165–172 (CETCQGMG), 187–194 (CPTCHGEG), and 201–208 (CASCHGQG).

It belongs to the DnaJ family. As to quaternary structure, homodimer. Zn(2+) serves as cofactor.

The protein localises to the cytoplasm. Participates actively in the response to hyperosmotic and heat shock by preventing the aggregation of stress-denatured proteins and by disaggregating proteins, also in an autonomous, DnaK-independent fashion. Unfolded proteins bind initially to DnaJ; upon interaction with the DnaJ-bound protein, DnaK hydrolyzes its bound ATP, resulting in the formation of a stable complex. GrpE releases ADP from DnaK; ATP binding to DnaK triggers the release of the substrate protein, thus completing the reaction cycle. Several rounds of ATP-dependent interactions between DnaJ, DnaK and GrpE are required for fully efficient folding. Also involved, together with DnaK and GrpE, in the DNA replication of plasmids through activation of initiation proteins. The protein is Chaperone protein DnaJ of Legionella pneumophila (strain Lens).